Here is a 332-residue protein sequence, read N- to C-terminus: tRNA U34 carboxymethyltransferase (332 aa).

Residues Lys91, Trp105, Lys110, Gly130, 152–154 (DPS), 181–182 (IE), Met196, Tyr200, and Arg315 each bind carboxy-S-adenosyl-L-methionine.

Belongs to the class I-like SAM-binding methyltransferase superfamily. CmoB family. In terms of assembly, homotetramer.

It catalyses the reaction carboxy-S-adenosyl-L-methionine + 5-hydroxyuridine(34) in tRNA = 5-carboxymethoxyuridine(34) in tRNA + S-adenosyl-L-homocysteine + H(+). In terms of biological role, catalyzes carboxymethyl transfer from carboxy-S-adenosyl-L-methionine (Cx-SAM) to 5-hydroxyuridine (ho5U) to form 5-carboxymethoxyuridine (cmo5U) at position 34 in tRNAs. The protein is tRNA U34 carboxymethyltransferase of Shewanella putrefaciens (strain CN-32 / ATCC BAA-453).